We begin with the raw amino-acid sequence, 274 residues long: Nitrogenase iron protein (274 aa).

8–15 is a binding site for ATP; the sequence is GKGGIGKS. Cys-94 serves as a coordination point for [4Fe-4S] cluster. Position 97 is an ADP-ribosylarginine; by dinitrogenase reductase ADP-ribosyltransferase (Arg-97). Cys-131 contributes to the [4Fe-4S] cluster binding site.

Belongs to the NifH/BchL/ChlL family. In terms of assembly, homodimer. [4Fe-4S] cluster is required as a cofactor. In terms of processing, the reversible ADP-ribosylation of Arg-97 inactivates the nitrogenase reductase and regulates nitrogenase activity.

It catalyses the reaction N2 + 8 reduced [2Fe-2S]-[ferredoxin] + 16 ATP + 16 H2O = H2 + 8 oxidized [2Fe-2S]-[ferredoxin] + 2 NH4(+) + 16 ADP + 16 phosphate + 6 H(+). Its function is as follows. The key enzymatic reactions in nitrogen fixation are catalyzed by the nitrogenase complex, which has 2 components: the iron protein and the molybdenum-iron protein. This Pelodictyon phaeoclathratiforme (strain DSM 5477 / BU-1) protein is Nitrogenase iron protein.